A 385-amino-acid polypeptide reads, in one-letter code: UPF0744 protein YSD83 (385 aa).

It belongs to the UPF0744 family.

This chain is UPF0744 protein YSD83 (YSD83), found in Saccharomyces paradoxus (Yeast).